The sequence spans 209 residues: Putative AgrB-like protein (209 aa).

Helical transmembrane passes span 49 to 71 (ILFLVSYYFGLIKETIIMLAAFG), 82 to 102 (AKNSIVCTVMSLLMFVLGAYL), 105 to 125 (YLLFNNYMVLASFIIVNLLLF), 149 to 169 (QAVLMGMLLMAITLIIPDELI), and 173 to 193 (ISLSSYFEIISILPITYKVLG).

This sequence belongs to the AgrB family.

It is found in the cell membrane. Its function is as follows. May be involved in the proteolytic processing of a quorum sensing system signal molecule precursor. The sequence is that of Putative AgrB-like protein from Clostridium acetobutylicum (strain ATCC 824 / DSM 792 / JCM 1419 / IAM 19013 / LMG 5710 / NBRC 13948 / NRRL B-527 / VKM B-1787 / 2291 / W).